The sequence spans 285 residues: Biotin synthase (285 aa).

Residues 2–223 (STRKQIFLCA…RRAHTLLGED (222 aa)) enclose the Radical SAM core domain. The [4Fe-4S] cluster site is built by cysteine 20, cysteine 24, and cysteine 27. Residues cysteine 64, cysteine 99, and cysteine 157 each coordinate [2Fe-2S] cluster.

Belongs to the radical SAM superfamily. Biotin synthase family. In terms of assembly, homodimer. [4Fe-4S] cluster is required as a cofactor. The cofactor is [2Fe-2S] cluster.

It catalyses the reaction (4R,5S)-dethiobiotin + (sulfur carrier)-SH + 2 reduced [2Fe-2S]-[ferredoxin] + 2 S-adenosyl-L-methionine = (sulfur carrier)-H + biotin + 2 5'-deoxyadenosine + 2 L-methionine + 2 oxidized [2Fe-2S]-[ferredoxin]. The protein operates within cofactor biosynthesis; biotin biosynthesis; biotin from 7,8-diaminononanoate: step 2/2. In terms of biological role, catalyzes the conversion of dethiobiotin (DTB) to biotin by the insertion of a sulfur atom into dethiobiotin via a radical-based mechanism. This chain is Biotin synthase, found in Sulfurovum sp. (strain NBC37-1).